The chain runs to 68 residues: Large ribosomal subunit protein uL29 (68 aa).

It belongs to the universal ribosomal protein uL29 family.

In Methanobrevibacter smithii (strain ATCC 35061 / DSM 861 / OCM 144 / PS), this protein is Large ribosomal subunit protein uL29.